The following is a 682-amino-acid chain: DNA ligase (682 aa).

Residues 38–42 (DAEYD), 87–88 (SI), and E119 each bind NAD(+). Residue K121 is the N6-AMP-lysine intermediate of the active site. NAD(+)-binding residues include R142, E181, K298, and K322. Zn(2+) is bound by residues C416, C419, C434, and C439. The region spanning 601-682 (GHEMPLAGKT…LLSLLEPGER (82 aa)) is the BRCT domain.

This sequence belongs to the NAD-dependent DNA ligase family. LigA subfamily. It depends on Mg(2+) as a cofactor. Mn(2+) is required as a cofactor.

The enzyme catalyses NAD(+) + (deoxyribonucleotide)n-3'-hydroxyl + 5'-phospho-(deoxyribonucleotide)m = (deoxyribonucleotide)n+m + AMP + beta-nicotinamide D-nucleotide.. Functionally, DNA ligase that catalyzes the formation of phosphodiester linkages between 5'-phosphoryl and 3'-hydroxyl groups in double-stranded DNA using NAD as a coenzyme and as the energy source for the reaction. It is essential for DNA replication and repair of damaged DNA. This chain is DNA ligase, found in Desulfosudis oleivorans (strain DSM 6200 / JCM 39069 / Hxd3) (Desulfococcus oleovorans).